An 818-amino-acid polypeptide reads, in one-letter code: ATM interactor (818 aa).

Low complexity predominate over residues 1–34; the sequence is MAATEAAAADSAGPAPGVPATPASTRGAAAASSP. Residues 1 to 62 form a disordered region; sequence MAATEAAAAD…RAAAPVPPAR (62 aa). The C2H2-type 1 zinc-finger motif lies at 80–105; that stretch reads ILCTVRGCGKILPNSPALNMHLVKSH. The segment at 161 to 181 adopts a C2H2-type 2; degenerate zinc-finger fold; that stretch reads HKCSKCSNSYGTEWDLKRHEE. Residues 210-221 show a composition bias toward basic and acidic residues; that stretch reads HEIPAEHRDPPS. Disordered regions lie at residues 210–284 and 603–625; these read HEIP…ATPP and DNRSLLSDTNPGPDAQLPAGSAQ. Residues 219-437 are required for formation of RAD51 foci; sequence PPSKKRKMES…PDSSVSSCSQ (219 aa). 2 stretches are compositionally biased toward polar residues: residues 229–243 and 603–612; these read YLQNQKLSSKTTEPL and DNRSLLSDTN.

In terms of assembly, interacts via its C-terminus with ATM. Interacts with DYNLL; this interaction inhibits ATMIN transcriptional activity and hence may play a role in a feedback loop whereby DYNLL1 inhibits transactivation of its own promoter by ATMIN. ATMIN.

It is found in the nucleus. In terms of biological role, transcription factor. Plays a crucial role in cell survival and RAD51 foci formation in response to methylating DNA damage. Involved in regulating the activity of ATM in the absence of DNA damage. May play a role in stabilizing ATM. Binds to the DYNLL1 promoter and activates its transcription. The protein is ATM interactor of Mus musculus (Mouse).